The primary structure comprises 116 residues: Calcium-regulated OB-fold protein CarO (116 aa).

The signal sequence occupies residues 1 to 21 (MKLRHLPLIAAIGLFSTVTLA).

The protein resides in the periplasm. Functionally, plays a role in intracellular Ca(2+) homeostasis. Involved in cell protection against oxidative stress in strain 25W. The chain is Calcium-regulated OB-fold protein CarO from Pseudomonas aeruginosa (strain ATCC 15692 / DSM 22644 / CIP 104116 / JCM 14847 / LMG 12228 / 1C / PRS 101 / PAO1).